Reading from the N-terminus, the 446-residue chain is Maturase K (446 aa).

Belongs to the intron maturase 2 family. MatK subfamily.

The protein resides in the plastid. It localises to the chloroplast. Functionally, usually encoded in the trnK tRNA gene intron. Probably assists in splicing its own and other chloroplast group II introns. The sequence is that of Maturase K from Phalaenopsis aphrodite subsp. formosana (Moth orchid).